We begin with the raw amino-acid sequence, 157 residues long: Transcriptional repressor NrdR (157 aa).

A zinc finger spans residues 3–34 (CPHCHQNSSRVIDSRPTDEGRVIRRRRECENC). In terms of domain architecture, ATP-cone spans 49-139 (LLVIKKNGTR…VYRQFKDMNV (91 aa)).

It belongs to the NrdR family. Zn(2+) is required as a cofactor.

Negatively regulates transcription of bacterial ribonucleotide reductase nrd genes and operons by binding to NrdR-boxes. This chain is Transcriptional repressor NrdR, found in Latilactobacillus sakei subsp. sakei (strain 23K) (Lactobacillus sakei subsp. sakei).